The chain runs to 296 residues: Ribosomal RNA small subunit methyltransferase H (296 aa).

S-adenosyl-L-methionine-binding positions include G41 to Y43, D59, F86, D104, and Q111.

It belongs to the methyltransferase superfamily. RsmH family.

It is found in the cytoplasm. It carries out the reaction cytidine(1402) in 16S rRNA + S-adenosyl-L-methionine = N(4)-methylcytidine(1402) in 16S rRNA + S-adenosyl-L-homocysteine + H(+). In terms of biological role, specifically methylates the N4 position of cytidine in position 1402 (C1402) of 16S rRNA. This Neorickettsia sennetsu (strain ATCC VR-367 / Miyayama) (Ehrlichia sennetsu) protein is Ribosomal RNA small subunit methyltransferase H.